Reading from the N-terminus, the 335-residue chain is UPF0284 protein TK0853 (335 aa).

The protein belongs to the UPF0284 family.

In Thermococcus kodakarensis (strain ATCC BAA-918 / JCM 12380 / KOD1) (Pyrococcus kodakaraensis (strain KOD1)), this protein is UPF0284 protein TK0853.